We begin with the raw amino-acid sequence, 301 residues long: Probable alpha-L-glutamate ligase 1 (301 aa).

One can recognise an ATP-grasp domain in the interval 104–287 (MQLMSRRGIG…VAGAIIDFVE (184 aa)). Residues Lys-141, 178 to 179 (EY), Asp-187, and 211 to 213 (RSN) contribute to the ATP site. Asp-248, Glu-260, and Asn-262 together coordinate Mg(2+). 3 residues coordinate Mn(2+): Asp-248, Glu-260, and Asn-262.

Belongs to the RimK family. Mg(2+) serves as cofactor. Mn(2+) is required as a cofactor.

The chain is Probable alpha-L-glutamate ligase 1 from Shewanella baltica (strain OS185).